The primary structure comprises 541 residues: Membrane protein insertase YidC (541 aa).

6 helical membrane-spanning segments follow: residues 6 to 26 (NILLIGLLFVSFLLWQQWQAD), 325 to 345 (LVVDYGFLWWLAVPIHWLLMF), 349 to 369 (FVGNWGMAIILITLTVRGLLF), 420 to 440 (GGCLPIILQMPIFIALYWVLL), 457 to 477 (LSVQDPYYILPLLMGVSMFVM), and 500 to 520 (VIFTVFFLWFPAGLVLYWLVG).

Belongs to the OXA1/ALB3/YidC family. Type 1 subfamily. As to quaternary structure, interacts with the Sec translocase complex via SecD. Specifically interacts with transmembrane segments of nascent integral membrane proteins during membrane integration.

The protein resides in the cell inner membrane. In terms of biological role, required for the insertion and/or proper folding and/or complex formation of integral membrane proteins into the membrane. Involved in integration of membrane proteins that insert both dependently and independently of the Sec translocase complex, as well as at least some lipoproteins. Aids folding of multispanning membrane proteins. This Shewanella baltica (strain OS223) protein is Membrane protein insertase YidC.